Here is a 309-residue protein sequence, read N- to C-terminus: Verprolin (309 aa).

Residues 1–13 show a composition bias toward pro residues; that stretch reads MAPAPPPPPPAPA. Residues 1–273 form a disordered region; sequence MAPAPPPPPP…PNRVDDHGRF (273 aa). In terms of domain architecture, WH2 spans 27-44; the sequence is DRSALLNSIQKGKKLKKA. Polar residues predominate over residues 82-91; sequence LPTSSNNTQQ. Residues 141–207 are compositionally biased toward pro residues; sequence TSAPPRPSIP…PPKVPPPPLS (67 aa).

This sequence belongs to the verprolin family. As to quaternary structure, interacts with wsp1. Interacts with myo1 (via SH3 domain). Interacts with actin monomers.

The protein resides in the cytoplasm. It is found in the cytoskeleton. Involved in cytoskeletal organization and cellular growth. May exert its effects on the cytoskeleton directly, or indirectly via proline-binding proteins such as profilin or proteins possessing SH3 domains. Plays a role in actin patch assembly by enhancing the ability of myo1 to stimulate actin polymerization by the Arp2/3 complex. This Schizosaccharomyces pombe (strain 972 / ATCC 24843) (Fission yeast) protein is Verprolin.